Here is a 114-residue protein sequence, read N- to C-terminus: Large ribosomal subunit protein bL19 (114 aa).

This sequence belongs to the bacterial ribosomal protein bL19 family.

Its function is as follows. This protein is located at the 30S-50S ribosomal subunit interface and may play a role in the structure and function of the aminoacyl-tRNA binding site. This is Large ribosomal subunit protein bL19 from Bacillus cereus (strain AH187).